We begin with the raw amino-acid sequence, 499 residues long: Thermostable carboxypeptidase 1 (499 aa).

The Peptidase M32 domain maps to 6–499; the sequence is QNETIKQILA…FVRWVKEKYL (494 aa). The HPF signature appears at 238-240; the sequence is HPF. The DXRXT signature appears at 248-252; the sequence is DVRIT. His269 serves as a coordination point for Co(2+). The HEXXH signature appears at 269-273; that stretch reads HEFGH. The active-site Proton donor/acceptor is Glu270. Co(2+) is bound by residues His273 and Glu299. The short motif at 298–301 is the HES/GQ element; the sequence is HESQ. Positions 350–355 match the I/NRXXA/SD motif; the sequence is IRTEAD. Residues 405-412 carry the GXXQDXHW motif; that stretch reads GILQDIHW.

It belongs to the peptidase M32 family. Homodimer. Co(2+) is required as a cofactor. Requires Mn(2+) as cofactor.

The enzyme catalyses Release of a C-terminal amino acid with broad specificity, except for -Pro.. EDTA and DTT reversibly abolish carboxypeptidase activity. Its function is as follows. Broad specificity carboxypetidase that releases amino acids sequentially from the C-terminus, including neutral, aromatic, polar and basic residues, but not Pro, Gly, Asp and Glu. The chain is Thermostable carboxypeptidase 1 from Pyrococcus furiosus (strain ATCC 43587 / DSM 3638 / JCM 8422 / Vc1).